We begin with the raw amino-acid sequence, 164 residues long: Pheromone-binding protein (164 aa).

Residues 1-22 (MSIQGQIALALMVNMAVGSVDA) form the signal peptide. 3 disulfide bridges follow: C41–C76, C72–C130, and C119–C139.

Belongs to the PBP/GOBP family. As to quaternary structure, homodimer. In terms of tissue distribution, antenna.

This major soluble protein in olfactory sensilla of male moths serves to solubilize the extremely hydrophobic pheromone molecules such as bombykol and to transport pheromone through the aqueous lymph to receptors located on olfactory cilia. The sequence is that of Pheromone-binding protein from Bombyx mori (Silk moth).